Reading from the N-terminus, the 427-residue chain is Ectonucleoside triphosphate diphosphohydrolase 5 (427 aa).

Positions 1 to 24 (MATSWGAVFMLIIACVGSTVFYRE) are cleaved as a signal peptide. E171 (proton acceptor) is an active-site residue. N-linked (GlcNAc...) asparagine glycosylation occurs at N231. Cystine bridges form between C271–C302 and C362–C376.

Belongs to the GDA1/CD39 NTPase family. In terms of assembly, monomer; active form. Homodimer; disulfide-linked. Homodimers are enzymatically inactive. The cofactor is Ca(2+). Requires Mg(2+) as cofactor. N-glycosylated; high-mannose type. Ubiquitous.

The protein localises to the endoplasmic reticulum. Its subcellular location is the secreted. It catalyses the reaction a ribonucleoside 5'-diphosphate + H2O = a ribonucleoside 5'-phosphate + phosphate + H(+). It carries out the reaction GDP + H2O = GMP + phosphate + H(+). The enzyme catalyses UDP + H2O = UMP + phosphate + H(+). The catalysed reaction is IDP + H2O = IMP + phosphate + H(+). It catalyses the reaction CDP + H2O = CMP + phosphate + H(+). It carries out the reaction ADP + H2O = AMP + phosphate + H(+). It functions in the pathway protein modification; protein glycosylation. Its function is as follows. Hydrolyzes nucleoside diphosphates with a preference for GDP, IDP and UDP compared to ADP and CDP. In the lumen of the endoplasmic reticulum, hydrolyzes UDP that acts as an end-product feedback inhibitor of the UDP-Glc:glycoprotein glucosyltransferases. UMP can be transported back by an UDP-sugar antiporter to the cytosol where it is consumed to regenerate UDP-glucose. Therefore, it positively regulates protein reglucosylation by clearing UDP from the ER lumen and by promoting the regeneration of UDP-glucose. Protein reglucosylation is essential to proper glycoprotein folding and quality control in the ER. This chain is Ectonucleoside triphosphate diphosphohydrolase 5 (Entpd5), found in Mus musculus (Mouse).